Consider the following 124-residue polypeptide: Putative melanoma-associated antigen 5P (124 aa).

Residues 1-14 are compositionally biased toward basic and acidic residues; the sequence is MSLEQKSQHCKPEE. 2 disordered regions span residues 1–69 and 82–103; these read MSLE…QGAS and QSIK…DPES. One can recognise an MAGE domain in the interval 3 to 124; it reads LEQKSQHCKP…DLIHFLLLKY (122 aa). 2 stretches are compositionally biased toward polar residues: residues 30–44 and 82–100; these read AATT…SSSP and QSIK…TSPD.

Expressed in many tumors of several types, such as melanoma, head and neck squamous cell carcinoma, lung carcinoma and breast carcinoma, but not in normal tissues except for testes.

Its function is as follows. May negatively regulates apoptosis. The polypeptide is Putative melanoma-associated antigen 5P (Homo sapiens (Human)).